Here is a 124-residue protein sequence, read N- to C-terminus: Small ribosomal subunit protein uS12 (124 aa).

D90 carries the 3-methylthioaspartic acid modification.

It belongs to the universal ribosomal protein uS12 family. Part of the 30S ribosomal subunit. Contacts proteins S8 and S17. May interact with IF1 in the 30S initiation complex.

Functionally, with S4 and S5 plays an important role in translational accuracy. In terms of biological role, interacts with and stabilizes bases of the 16S rRNA that are involved in tRNA selection in the A site and with the mRNA backbone. Located at the interface of the 30S and 50S subunits, it traverses the body of the 30S subunit contacting proteins on the other side and probably holding the rRNA structure together. The combined cluster of proteins S8, S12 and S17 appears to hold together the shoulder and platform of the 30S subunit. The protein is Small ribosomal subunit protein uS12 of Wolbachia pipientis subsp. Culex pipiens (strain wPip).